The primary structure comprises 345 residues: MLSTVNNNIVIALDAMGGDFAPLSVIHGAGFFLDNLVDPGIKVFFHIYGDKEEVSPLLLKYKKVSNNSEFTHCSDNVLANDKPSFALRHRKDSSMKAAIVAVKEGKAFGVVSSGNTGALMAISRFVLGTLPNIYRPAIASICPTKTKSFALLDLGANVDCNADSLFQFALMGSIFAKIALKIDNPEVALLNIGTEEVKGNDSVRGAFELLKNAPGINFKGYIEASEFLEGNIDVIVADGFVGNVMLKTAEATASTFINLIKQEVFNSWIAKMLVGILLKSKLNKALTRFNPKIRSGAMFLGLNGIIIKSHGNSDAISFAHAIKFAVNAISENLNQKIINGVSHIE.

The protein belongs to the PlsX family. As to quaternary structure, homodimer. Probably interacts with PlsY.

The protein resides in the cytoplasm. The catalysed reaction is a fatty acyl-[ACP] + phosphate = an acyl phosphate + holo-[ACP]. Its pathway is lipid metabolism; phospholipid metabolism. Its function is as follows. Catalyzes the reversible formation of acyl-phosphate (acyl-PO(4)) from acyl-[acyl-carrier-protein] (acyl-ACP). This enzyme utilizes acyl-ACP as fatty acyl donor, but not acyl-CoA. This is Phosphate acyltransferase from Wolbachia sp. subsp. Drosophila simulans (strain wRi).